A 368-amino-acid chain; its full sequence is 3-dehydroquinate synthase (368 aa).

NAD(+) is bound by residues 131–132, lysine 144, and lysine 153; that span reads TT. Zn(2+) is bound by residues glutamate 186, histidine 249, and histidine 267.

It belongs to the sugar phosphate cyclases superfamily. Dehydroquinate synthase family. The cofactor is Co(2+). Zn(2+) is required as a cofactor. It depends on NAD(+) as a cofactor.

It localises to the cytoplasm. The catalysed reaction is 7-phospho-2-dehydro-3-deoxy-D-arabino-heptonate = 3-dehydroquinate + phosphate. Its pathway is metabolic intermediate biosynthesis; chorismate biosynthesis; chorismate from D-erythrose 4-phosphate and phosphoenolpyruvate: step 2/7. Its function is as follows. Catalyzes the conversion of 3-deoxy-D-arabino-heptulosonate 7-phosphate (DAHP) to dehydroquinate (DHQ). The polypeptide is 3-dehydroquinate synthase (Pelagibacter ubique (strain HTCC1062)).